The primary structure comprises 525 residues: GMP synthase [glutamine-hydrolyzing] (525 aa).

In terms of domain architecture, Glutamine amidotransferase type-1 spans 9-207; sequence RILILDFGSQ…VSDICGCEKQ (199 aa). Cys86 acts as the Nucleophile in catalysis. Active-site residues include His181 and Glu183. The 193-residue stretch at 208–400 folds into the GMPS ATP-PPase domain; that stretch reads WTPAKIIDDA…LGLPYNMLYR (193 aa). 235 to 241 is an ATP binding site; it reads SGGVDSS.

Homodimer.

It catalyses the reaction XMP + L-glutamine + ATP + H2O = GMP + L-glutamate + AMP + diphosphate + 2 H(+). It participates in purine metabolism; GMP biosynthesis; GMP from XMP (L-Gln route): step 1/1. Catalyzes the synthesis of GMP from XMP. This is GMP synthase [glutamine-hydrolyzing] from Idiomarina loihiensis (strain ATCC BAA-735 / DSM 15497 / L2-TR).